The chain runs to 508 residues: Protein adenylyltransferase fic-1 (508 aa).

Residues 44 to 64 (TVIIISVLVSLICQHFVPYAV) form a helical membrane-spanning segment. TPR repeat units follow at residues 147 to 180 (AILAAKAAGRSRKDGNLERAMTIMEHAMALAPTN) and 181 to 214 (PQILIEMGQIREMHNELVEADQCYVKALAYDPGN). The Inhibitory (S/T)XXXE(G/N) motif signature appears at 270–275 (TVAIEG). E274 serves as a coordination point for ATP. The region spanning 326 to 461 (ISIDDILEMH…LRPFVRYVAK (136 aa)) is the Fido domain. An O-AMP-threonine; by autocatalysis modification is found at T352. Residue 357–360 (VGRF) participates in ATP binding. The active site involves H404. ATP contacts are provided by residues 408-415 (DGNGRTAR), 440-441 (YY), and N448. Position 476 is an O-AMP-threonine; by autocatalysis (T476). Positions 482 to 508 (LNSGDSKLTPEESEVSEKIEAECRAGN) are disordered. A compositionally biased stretch (basic and acidic residues) spans 496–508 (VSEKIEAECRAGN).

It belongs to the fic family. Forms homodimers; homodimerization might be required for adenylyltransferase activity. In terms of tissue distribution, ubiquitously expressed, with high expression in the germline.

The protein resides in the endoplasmic reticulum membrane. It is found in the nucleus membrane. It carries out the reaction L-tyrosyl-[protein] + ATP = O-(5'-adenylyl)-L-tyrosyl-[protein] + diphosphate. The enzyme catalyses L-threonyl-[protein] + ATP = 3-O-(5'-adenylyl)-L-threonyl-[protein] + diphosphate. The catalysed reaction is 3-O-(5'-adenylyl)-L-threonyl-[protein] + H2O = L-threonyl-[protein] + AMP + H(+). Its activity is regulated as follows. The side chain of Glu-274 determines which of the two opposing activities (AMPylase or de-AMPylase) will take place. In response to endoplasmic reticulum stress, mediates de-AMPylase activity. Adenylyltransferase activity is inhibited by the inhibitory helix present at the N-terminus: Glu-274 binds ATP and competes with ATP-binding at Arg-415, thereby preventing adenylyltransferase activity. In unstressed cells, disengagement of Glu-274 promotes adenylyltransferase activity. Activation dissociates ATP-binding from Glu-274, allowing ordered binding of the entire ATP moiety with the alpha-phosphate in an orientation that is productive for accepting an incoming target hydroxyl side chain. In terms of biological role, protein that can both mediate the addition of adenosine 5'-monophosphate (AMP) to specific residues of target proteins (AMPylation), and the removal of the same modification from target proteins (de-AMPylation), depending on the context. The side chain of Glu-274 determines which of the two opposing activities (AMPylase or de-AMPylase) will take place. Adenylyltransferase that mediates the addition of adenosine 5'-monophosphate (AMP) to specific residues of target proteins. In vivo target proteins include the heat-shock 70 family proteins hsp-1 and hsp-3 and the translation elongation factors eef-1A, eef-1G and eef-2. Can AMPylate core histone H3 in vitro. Can also act as a phosphodiesterase by mediating removal of ATP (de-AMPylation) from target proteins. Decreases susceptibility to P.aeruginosa-mediated killing and might therefore play a role in the innate immune response. The chain is Protein adenylyltransferase fic-1 from Caenorhabditis elegans.